A 183-amino-acid polypeptide reads, in one-letter code: Peptide deformylase (183 aa).

C111 and H154 together coordinate Fe cation. Residue E155 is part of the active site. H158 lines the Fe cation pocket.

The cofactor is Fe(2+).

The catalysed reaction is N-terminal N-formyl-L-methionyl-[peptide] + H2O = N-terminal L-methionyl-[peptide] + formate. Removes the formyl group from the N-terminal Met of newly synthesized proteins. Requires at least a dipeptide for an efficient rate of reaction. N-terminal L-methionine is a prerequisite for activity but the enzyme has broad specificity at other positions. This is Peptide deformylase from Staphylococcus aureus.